The primary structure comprises 434 residues: Histidinol dehydrogenase (434 aa).

Residues Y130, Q188, and N211 each contribute to the NAD(+) site. S237, Q259, and H262 together coordinate substrate. Q259 and H262 together coordinate Zn(2+). Catalysis depends on proton acceptor residues E326 and H327. Residues H327, D360, E414, and H419 each contribute to the substrate site. Residue D360 coordinates Zn(2+). H419 is a Zn(2+) binding site.

This sequence belongs to the histidinol dehydrogenase family. Homodimer. It depends on Zn(2+) as a cofactor.

It catalyses the reaction L-histidinol + 2 NAD(+) + H2O = L-histidine + 2 NADH + 3 H(+). It participates in amino-acid biosynthesis; L-histidine biosynthesis; L-histidine from 5-phospho-alpha-D-ribose 1-diphosphate: step 9/9. In terms of biological role, catalyzes the sequential NAD-dependent oxidations of L-histidinol to L-histidinaldehyde and then to L-histidine. The protein is Histidinol dehydrogenase of Shigella dysenteriae serotype 1 (strain Sd197).